The sequence spans 136 residues: HetP-like commitment protein Alr2902 (136 aa).

Positions 94–109 are enriched in polar residues; the sequence is KASTQDLNQSNNSDYL. Residues 94 to 120 form a disordered region; that stretch reads KASTQDLNQSNNSDYLTTPEPDKRGNI.

The protein belongs to the HetP family. As to quaternary structure, in bacterial two-hybrid assays interacts robustly with HetR and Alr3234 and weakly with itself, HetP and Asl1930.

In terms of biological role, delays heterocyst differentiation and commitment when nitrogen is limiting. Interplay between the 4 HetP paralogs controls the timing of commitment to heterocyst formation and its duration. Epistatic analysis show that the 3 paralogs act upstream of hetP to delay commitment (asl1930, alr3234) or inhibit development (alr2902). Asl1930 and Alr3234 must also attenuate the activity of Alr2902. When only this homolog is present no heterocysts are formed, showing it inhibits development. Ectopic expression partially complements a hetP deletion. The polypeptide is HetP-like commitment protein Alr2902 (Nostoc sp. (strain PCC 7120 / SAG 25.82 / UTEX 2576)).